A 44-amino-acid polypeptide reads, in one-letter code: Antifungal protein R (44 aa).

It belongs to the thaumatin family.

Functionally, has antifungal activity. Inhibits the growth of Trichoderma viridae and Candida albicans. The protein is Antifungal protein R of Hordeum vulgare (Barley).